Here is a 739-residue protein sequence, read N- to C-terminus: Pre-mRNA-splicing factor ATP-dependent RNA helicase ddx-15 (739 aa).

Positions 1–19 are enriched in basic and acidic residues; the sequence is MSSRHRLDLDGSGRGDRRR. The tract at residues 1–49 is disordered; the sequence is MSSRHRLDLDGSGRGDRRRSPNRRSRSRSRSPHRRSSPDRKRQIGAVGN. Residues 20–35 are compositionally biased toward basic residues; it reads SPNRRSRSRSRSPHRR. The 172-residue stretch at 86–257 folds into the Helicase ATP-binding domain; the sequence is MELLRNNQCI…FEDCPLLSVP (172 aa). 99 to 106 provides a ligand contact to ATP; the sequence is GETGSGKT. The DEAH box motif lies at 204 to 207; it reads DEAH. Residues 282–462 enclose the Helicase C-terminal domain; that stretch reads TVIQIHMVEE…SVVLQLKKLG (181 aa).

This sequence belongs to the DEAD box helicase family. DEAH subfamily. DDX15/PRP43 sub-subfamily.

It is found in the nucleus. The catalysed reaction is ATP + H2O = ADP + phosphate + H(+). Its function is as follows. Pre-mRNA processing factor involved in disassembly of spliceosomes after the release of mature mRNA. The polypeptide is Pre-mRNA-splicing factor ATP-dependent RNA helicase ddx-15 (Caenorhabditis elegans).